A 151-amino-acid polypeptide reads, in one-letter code: Acidic phospholipase A2 2 (151 aa).

The N-terminal stretch at 1–27 (MYPAHLLVLLAVCVSLLGAASIPARPL) is a signal peptide. 7 cysteine pairs are disulfide-bonded: cysteine 38/cysteine 104, cysteine 54/cysteine 151, cysteine 56/cysteine 72, cysteine 71/cysteine 132, cysteine 78/cysteine 125, cysteine 88/cysteine 118, and cysteine 111/cysteine 123. The Ca(2+) site is built by tyrosine 55, glycine 57, and glycine 59. Histidine 75 is a catalytic residue. Position 76 (aspartate 76) interacts with Ca(2+). The active site involves aspartate 126.

This sequence belongs to the phospholipase A2 family. Group I subfamily. D49 sub-subfamily. Requires Ca(2+) as cofactor. As to expression, expressed by the venom gland.

Its subcellular location is the secreted. The enzyme catalyses a 1,2-diacyl-sn-glycero-3-phosphocholine + H2O = a 1-acyl-sn-glycero-3-phosphocholine + a fatty acid + H(+). Its function is as follows. PLA2 catalyzes the calcium-dependent hydrolysis of the 2-acyl groups in 3-sn-phosphoglycerides. In Tropidechis carinatus (Australian rough-scaled snake), this protein is Acidic phospholipase A2 2.